Here is a 394-residue protein sequence, read N- to C-terminus: p-hydroxybenzoate hydroxylase (394 aa).

Residues Ser-13, Glu-32, 42-47 (RIRAGV), and Gln-102 each bind FAD. Substrate-binding positions include Tyr-201, 212–214 (SQR), and Tyr-222. An FAD-binding site is contributed by Asp-286. Pro-293 is a binding site for substrate. Residue 299-300 (LN) coordinates FAD.

It belongs to the aromatic-ring hydroxylase family. In terms of assembly, homodimer. FAD is required as a cofactor.

It catalyses the reaction 4-hydroxybenzoate + NADPH + O2 + H(+) = 3,4-dihydroxybenzoate + NADP(+) + H2O. It participates in aromatic compound metabolism; benzoate degradation via hydroxylation; 3,4-dihydroxybenzoate from benzoate: step 2/2. Functionally, catalyzes the incorporation of an atom of dioxygen into p-hydroxybenzoate (p-OHB) to form 3,4-dihydroxybenzoate (3,4DOHB). The reaction occurs in two parts: reduction of the flavin adenine dinucleotide (FAD) in the enzyme by reduced nicotinamide adenine dinucleotide phosphate (NADPH) in response to binding p-hydroxybenzoate to the enzyme and oxidation of reduced FAD with oxygen to form a hydroperoxide, which then oxygenates p-hydroxybenzoate. The protein is p-hydroxybenzoate hydroxylase of Pseudomonas aeruginosa (strain ATCC 15692 / DSM 22644 / CIP 104116 / JCM 14847 / LMG 12228 / 1C / PRS 101 / PAO1).